The following is a 221-amino-acid chain: UPF0502 protein Sputcn32_1644 (221 aa).

It belongs to the UPF0502 family.

This Shewanella putrefaciens (strain CN-32 / ATCC BAA-453) protein is UPF0502 protein Sputcn32_1644.